A 443-amino-acid chain; its full sequence is Tryptophan synthase beta chain (443 aa).

K110 bears the N6-(pyridoxal phosphate)lysine mark.

This sequence belongs to the TrpB family. Tetramer of two alpha and two beta chains. The cofactor is pyridoxal 5'-phosphate.

The catalysed reaction is (1S,2R)-1-C-(indol-3-yl)glycerol 3-phosphate + L-serine = D-glyceraldehyde 3-phosphate + L-tryptophan + H2O. It functions in the pathway amino-acid biosynthesis; L-tryptophan biosynthesis; L-tryptophan from chorismate: step 5/5. In terms of biological role, the beta subunit is responsible for the synthesis of L-tryptophan from indole and L-serine. The polypeptide is Tryptophan synthase beta chain (Thermococcus onnurineus (strain NA1)).